The sequence spans 144 residues: Cell division protein SepF (144 aa).

A compositionally biased stretch (polar residues) spans Thr21–Pro38. Residues Thr21–Asn40 form a disordered region.

Belongs to the SepF family. Homodimer. Interacts with FtsZ.

The protein localises to the cytoplasm. Functionally, cell division protein that is part of the divisome complex and is recruited early to the Z-ring. Probably stimulates Z-ring formation, perhaps through the cross-linking of FtsZ protofilaments. Its function overlaps with FtsA. The protein is Cell division protein SepF of Latilactobacillus sakei subsp. sakei (strain 23K) (Lactobacillus sakei subsp. sakei).